Reading from the N-terminus, the 152-residue chain is Arginine repressor (152 aa).

This sequence belongs to the ArgR family.

The protein resides in the cytoplasm. It functions in the pathway amino-acid biosynthesis; L-arginine biosynthesis [regulation]. Its function is as follows. Regulates arginine biosynthesis genes. In Lactiplantibacillus plantarum (strain ATCC BAA-793 / NCIMB 8826 / WCFS1) (Lactobacillus plantarum), this protein is Arginine repressor.